Consider the following 215-residue polypeptide: Probable GTP-binding protein EngB (215 aa).

One can recognise an EngB-type G domain in the interval 31–215; sequence GPPEIAFAGR…RTAILQAVVQ (185 aa). GTP is bound by residues 39 to 46, 66 to 70, 93 to 96, 160 to 163, and 194 to 196; these read GRSNVGKS, GRTQE, DMPG, TKSD, and TSA. 2 residues coordinate Mg(2+): serine 46 and threonine 68.

It belongs to the TRAFAC class TrmE-Era-EngA-EngB-Septin-like GTPase superfamily. EngB GTPase family. It depends on Mg(2+) as a cofactor.

Its function is as follows. Necessary for normal cell division and for the maintenance of normal septation. The polypeptide is Probable GTP-binding protein EngB (Bartonella bacilliformis (strain ATCC 35685 / KC583 / Herrer 020/F12,63)).